The sequence spans 619 residues: Very-long-chain aldehyde decarbonylase GL1-4 (619 aa).

5 helical membrane passes run 45–65 (IAFS…QIWI), 94–114 (GWDD…LAMP), 126–146 (GAVV…YWFH), 178–198 (FAEH…TIYL), and 325–345 (AWYM…AWIY). The Fatty acid hydroxylase domain occupies 138-272 (VEFLYYWFHR…MPFYDYIYNT (135 aa)).

The protein belongs to the sterol desaturase family. Homodimer.

It is found in the endoplasmic reticulum membrane. The catalysed reaction is a long-chain fatty aldehyde + 2 NADPH + O2 + H(+) = a long-chain alkane + formate + 2 NADP(+) + H2O. In terms of biological role, aldehyde decarbonylase involved in the conversion of aldehydes to alkanes. Core component of a very-long-chain alkane synthesis complex. In Oryza sativa subsp. indica (Rice), this protein is Very-long-chain aldehyde decarbonylase GL1-4.